We begin with the raw amino-acid sequence, 128 residues long: Flagellar hook-basal body complex protein FliE (128 aa).

The disordered stretch occupies residues 1–60 (MRPVASFRPPPTFSALQGGASSQATKTAGIDQRGTNQAFSLLDPQSTQSNSTDSSFGEMG). The span at 33 to 55 (RGTNQAFSLLDPQSTQSNSTDSS) shows a compositional bias: polar residues.

The protein belongs to the FliE family.

Its subcellular location is the bacterial flagellum basal body. This chain is Flagellar hook-basal body complex protein FliE, found in Rhodopirellula baltica (strain DSM 10527 / NCIMB 13988 / SH1).